Reading from the N-terminus, the 723-residue chain is Bifunctional lysine-specific demethylase and histidyl-hydroxylase NO66 (723 aa).

Disordered regions lie at residues 13–34 and 48–213; these read KKTAKKPAKKTTKQNRQKQKAA and SAVK…APSC. Positions 14–31 are enriched in basic residues; that stretch reads KTAKKPAKKTTKQNRQKQ. Positions 49–72 are enriched in low complexity; the sequence is AVKQNNGAKGKAKANGVKGNAKAQ. Acidic residues-rich tracts occupy residues 88–106 and 114–129; these read ESVDDYSSDSSYDEDEDNE and EDDYGSELSSGEEFEE. Residues 133 to 155 show a composition bias toward low complexity; sequence NSPSGSCSCSASSGSSNTENSPP. Over residues 190 to 199 the composition is skewed to basic and acidic residues; it reads EQKEGKELSK. Residues 204-213 show a composition bias toward low complexity; the sequence is KSAPAAAPSC. Residues 379-518 enclose the JmjC domain; sequence NPSTYLKGLR…NLMEALMPAV (140 aa). Positions 419, 421, and 484 each coordinate Fe cation.

This sequence belongs to the ROX family. NO66 subfamily. Fe(2+) serves as cofactor.

It is found in the nucleus. The catalysed reaction is N(6),N(6)-dimethyl-L-lysyl(36)-[histone H3] + 2 2-oxoglutarate + 2 O2 = L-lysyl(36)-[histone H3] + 2 formaldehyde + 2 succinate + 2 CO2. In terms of biological role, oxygenase that can act as both a histone lysine demethylase and a ribosomal histidine hydroxylase. Specifically demethylates 'Lys-4' (H3K4me) and 'Lys-36' (H3K36me) of histone H3, thereby playing a central role in histone code. The chain is Bifunctional lysine-specific demethylase and histidyl-hydroxylase NO66 from Drosophila grimshawi (Hawaiian fruit fly).